A 283-amino-acid polypeptide reads, in one-letter code: Energy-coupling factor transporter ATP-binding protein EcfA1 (283 aa).

In terms of domain architecture, ABC transporter spans 7–244 (VEFRHVSFTY…PELLQEIGLD (238 aa)). Residue 41–48 (GHNGSGKS) participates in ATP binding.

It belongs to the ABC transporter superfamily. Energy-coupling factor EcfA family. In terms of assembly, forms a stable energy-coupling factor (ECF) transporter complex composed of 2 membrane-embedded substrate-binding proteins (S component), 2 ATP-binding proteins (A component) and 2 transmembrane proteins (T component).

The protein resides in the cell membrane. In terms of biological role, ATP-binding (A) component of a common energy-coupling factor (ECF) ABC-transporter complex. Unlike classic ABC transporters this ECF transporter provides the energy necessary to transport a number of different substrates. This is Energy-coupling factor transporter ATP-binding protein EcfA1 from Lactobacillus acidophilus (strain ATCC 700396 / NCK56 / N2 / NCFM).